The following is a 191-amino-acid chain: Calcium and integrin-binding protein 1 (191 aa).

Glycine 2 is lipidated: N-myristoyl glycine. EF-hand domains are found at residues 103 to 138 (TPDI…LTGE) and 148 to 183 (EMKQ…SPDF). Ca(2+) is bound by residues aspartate 116, aspartate 118, aspartate 120, threonine 122, aspartate 127, aspartate 161, aspartate 163, aspartate 165, threonine 167, and glutamate 172.

As to quaternary structure, monomer. Interacts with the heterodimeric integrin alpha-IIb/beta3 (ITGA2B-ITGB3). Interacts with ITGA2B (via cytoplasmic domain); the interaction is direct and calcium-dependent. Interacts with the protein kinases PLK2/SNK and PRKDC (via the region immediately upstream of the kinase domain). Interacts with PLK3; the interaction inhibits PLK3 kinase activity. Interacts with PSEN2. Interacts (via C-terminus) with F8. Interacts with NBR1 (via C-terminus). Interacts with FEZ1 (via C-terminus). Interacts with UBR5 (via C-terminus); the interaction is sensitive to DNA damage, and may target CIB1 for ubiquitin-mediated degradation. Interacts with IFI6; the interaction is direct. Interacts with BCL2. Interacts with TAS1R2 (via C-terminus); the interaction is independent of the myristoylation state of CIB1. Interacts with ITPR3; the interaction occurs in a calcium dependent manner. Interacts with PTK2/FAK1. Interacts with MAP3K5; the interaction inhibits MAP3K5 activation by phosphorylation, and its subsequent interaction with TRAF2. Interacts (via C-terminal region) with STMN2 (via the N-terminal region); the interaction is direct, occurs in a calcium-dependent manner and attenuates the STMN2-induced neurite outgrowth inhibition. Interacts with SPHK1, the interaction occurs in a calcium-dependent manner. Interacts with ITGA2B (via C-terminal cytoplasmic tail); the interaction occurs upon platelet aggregation and is stabilized/increased in a calcium and magnesium-dependent manner. Interacts with PAK1 (via N-terminal region); the interaction is direct and occurs in a calcium-dependent manner. Interacts with RAC3 (via C-terminal region); the interaction induces their association with the cytoskeleton upon alpha-IIb/beta3 integrin-mediated adhesion. Interacts with ITGA5 and ITGAV. Interacts with MYO1C. Interacts with ITGA2B (via C-terminal cytoplasmic tail region). Interacts (via C-terminal region) with PPP3R1 isoform 1 and isoform 2; the interactions increase upon cardiomyocytes hypertrophy. Interacts with CACNA1C; the interaction increases upon cardiomyocytes hypertrophy. Interacts and forms a complex with TMC6 and TMC8; the interaction stabilizes each component of the complex. Expressed strongly in Sertoli cells, weakly in pachytene spermatocytes, round spermatids and condensing spermatids (at protein level). Expressed in testis. Expressed in cardiac myocytes and endothelial cells. Expressed in heart, liver, spleen, lung, kidney, brain and inner ear. In the inner ear, expressed in the vestibule, basilar membrane and spiral ganglion cells.

It localises to the membrane. It is found in the cell membrane. The protein resides in the sarcolemma. Its subcellular location is the apical cell membrane. The protein localises to the cell projection. It localises to the ruffle membrane. It is found in the filopodium tip. The protein resides in the growth cone. Its subcellular location is the lamellipodium. The protein localises to the cytoplasm. It localises to the cytoskeleton. It is found in the microtubule organizing center. The protein resides in the centrosome. Its subcellular location is the perinuclear region. The protein localises to the nucleus. It localises to the neuron projection. It is found in the perikaryon. Functionally, calcium-binding protein that plays a role in the regulation of numerous cellular processes, such as cell differentiation, cell division, cell proliferation, cell migration, thrombosis, angiogenesis, cardiac hypertrophy and apoptosis. Involved in bone marrow megakaryocyte differentiation by negatively regulating thrombopoietin-mediated signaling pathway. Participates in the endomitotic cell cycle of megakaryocyte, a form of mitosis in which both karyokinesis and cytokinesis are interrupted. Plays a role in integrin signaling by negatively regulating alpha-IIb/beta3 activation in thrombin-stimulated megakaryocytes preventing platelet aggregation. Up-regulates PTK2/FAK1 activity, and is also needed for the recruitment of PTK2/FAK1 to focal adhesions; it thus appears to play an important role in focal adhesion formation. Positively regulates cell migration on fibronectin in a CDC42-dependent manner, the effect being negatively regulated by PAK1. Functions as a negative regulator of stress activated MAP kinase (MAPK) signaling pathways. Down-regulates inositol 1,4,5-trisphosphate receptor-dependent calcium signaling. Involved in sphingosine kinase SPHK1 translocation to the plasma membrane in a N-myristoylation-dependent manner preventing TNF-alpha-induced apoptosis. Regulates serine/threonine-protein kinase PLK3 activity for proper completion of cell division progression. Plays a role in microtubule (MT) dynamics during neuronal development; disrupts the MT depolymerization activity of STMN2 attenuating NGF-induced neurite outgrowth and the MT reorganization at the edge of lamellipodia. Promotes cardiomyocyte hypertrophy via activation of the calcineurin/NFAT signaling pathway. Stimulates calcineurin PPP3R1 activity by mediating its anchoring to the sarcolemma. In ischemia-induced (pathological or adaptive) angiogenesis, stimulates endothelial cell proliferation, migration and microvessel formation by activating the PAK1 and ERK1/ERK2 signaling pathway. Also promotes cancer cell survival and proliferation. May regulate cell cycle and differentiation of spermatogenic germ cells, and/or differentiation of supporting Sertoli cells. Forms a complex with TMC6/EVER1 and TMC8/EVER2 in lymphocytes and keratynocytes where CIB1 stabilizes TMC6 and TMC8 levels and reciprocally. In Mus musculus (Mouse), this protein is Calcium and integrin-binding protein 1 (Cib1).